Here is a 258-residue protein sequence, read N- to C-terminus: Thiazole synthase (258 aa).

The active-site Schiff-base intermediate with DXP is the Lys97. Residues Gly158, 184–185 (AG), and 206–207 (NT) each bind 1-deoxy-D-xylulose 5-phosphate.

This sequence belongs to the ThiG family. In terms of assembly, homotetramer. Forms heterodimers with either ThiH or ThiS.

The protein localises to the cytoplasm. It catalyses the reaction [ThiS sulfur-carrier protein]-C-terminal-Gly-aminoethanethioate + 2-iminoacetate + 1-deoxy-D-xylulose 5-phosphate = [ThiS sulfur-carrier protein]-C-terminal Gly-Gly + 2-[(2R,5Z)-2-carboxy-4-methylthiazol-5(2H)-ylidene]ethyl phosphate + 2 H2O + H(+). The protein operates within cofactor biosynthesis; thiamine diphosphate biosynthesis. Its function is as follows. Catalyzes the rearrangement of 1-deoxy-D-xylulose 5-phosphate (DXP) to produce the thiazole phosphate moiety of thiamine. Sulfur is provided by the thiocarboxylate moiety of the carrier protein ThiS. In vitro, sulfur can be provided by H(2)S. This Bacteroides fragilis (strain ATCC 25285 / DSM 2151 / CCUG 4856 / JCM 11019 / LMG 10263 / NCTC 9343 / Onslow / VPI 2553 / EN-2) protein is Thiazole synthase.